We begin with the raw amino-acid sequence, 284 residues long: NADH-cytochrome b5 reductase 1 (284 aa).

The chain crosses the membrane as a helical span at residues 8-28; that stretch reads PFIIFATVAAIISSAVAYYFF. The FAD-binding FR-type domain maps to 41 to 144; the sequence is NDFQKFPLIE…RGPKGFFTYT (104 aa). FAD-binding positions include 124-139 and 150-182; these read ESKKIGETIDIRGPKG and SFGMIAGGTGITPMYQILTAILRNPEDKTKVSL.

Belongs to the flavoprotein pyridine nucleotide cytochrome reductase family. As to quaternary structure, monomer. Component of the 2-(3-amino-3-carboxypropyl)histidine synthase complex composed of DPH1, DPH2, DPH3 and a NADH-dependent reductase, predominantly CBR1. FAD is required as a cofactor.

It localises to the mitochondrion outer membrane. The enzyme catalyses 2 Fe(III)-[cytochrome b5] + NADH = 2 Fe(II)-[cytochrome b5] + NAD(+) + H(+). The catalysed reaction is 2 Fe(3+)-[Dph3] + NADH = 2 Fe(2+)-[Dph3] + NAD(+) + H(+). The protein operates within protein modification; peptidyl-diphthamide biosynthesis. NADH-dependent reductase for DPH3 and cytochrome b5. Required for the first step of diphthamide biosynthesis, a post-translational modification of histidine which occurs in elongation factor 2. DPH1 and DPH2 transfer a 3-amino-3-carboxypropyl (ACP) group from S-adenosyl-L-methionine (SAM) to a histidine residue, the reaction is assisted by a reduction system comprising DPH3 and a NADH-dependent reductase, predominantly CBR1. By reducing DPH3, also involved in the formation of the tRNA wobble base modification mcm5s 2U (5-methoxycarbonylmethyl-2-thiouridine), mediated by the elongator complex. The cytochrome b5/NADH cytochrome b5 reductase electron transfer system supports the catalytic activity of several sterol biosynthetic enzymes. The protein is NADH-cytochrome b5 reductase 1 (CBR1) of Debaryomyces hansenii (strain ATCC 36239 / CBS 767 / BCRC 21394 / JCM 1990 / NBRC 0083 / IGC 2968) (Yeast).